The primary structure comprises 268 residues: Undecaprenyl-diphosphatase (268 aa).

8 helical membrane passes run 3–23 (VFNL…EFIP), 46–66 (FEVL…SAKL), 84–104 (FGIL…HGFI), 107–127 (VLFE…FILL), 144–164 (YPLP…IPGV), 184–204 (AAEF…AYDL), 218–238 (LIGV…RYLL), and 248–268 (LFGW…LVWG).

Belongs to the UppP family.

It localises to the cell inner membrane. It carries out the reaction di-trans,octa-cis-undecaprenyl diphosphate + H2O = di-trans,octa-cis-undecaprenyl phosphate + phosphate + H(+). Catalyzes the dephosphorylation of undecaprenyl diphosphate (UPP). Confers resistance to bacitracin. This Brucella anthropi (strain ATCC 49188 / DSM 6882 / CCUG 24695 / JCM 21032 / LMG 3331 / NBRC 15819 / NCTC 12168 / Alc 37) (Ochrobactrum anthropi) protein is Undecaprenyl-diphosphatase.